Consider the following 196-residue polypeptide: Holliday junction branch migration complex subunit RuvA (196 aa).

Residues 1–63 (MYDYIKGTLV…DDAHLLFGFH (63 aa)) are domain I. The interval 64 to 142 (TEDEKEVFLK…ELPAETTNTT (79 aa)) is domain II. A flexible linker region spans residues 143-146 (ANQT). The interval 147–196 (AGNQQLDEAMEALLALGYKATELKKVKAFFEDTNETAEQYIKSALKMLMK) is domain III.

The protein belongs to the RuvA family. In terms of assembly, homotetramer. Forms an RuvA(8)-RuvB(12)-Holliday junction (HJ) complex. HJ DNA is sandwiched between 2 RuvA tetramers; dsDNA enters through RuvA and exits via RuvB. An RuvB hexamer assembles on each DNA strand where it exits the tetramer. Each RuvB hexamer is contacted by two RuvA subunits (via domain III) on 2 adjacent RuvB subunits; this complex drives branch migration. In the full resolvosome a probable DNA-RuvA(4)-RuvB(12)-RuvC(2) complex forms which resolves the HJ.

Its subcellular location is the cytoplasm. In terms of biological role, the RuvA-RuvB-RuvC complex processes Holliday junction (HJ) DNA during genetic recombination and DNA repair, while the RuvA-RuvB complex plays an important role in the rescue of blocked DNA replication forks via replication fork reversal (RFR). RuvA specifically binds to HJ cruciform DNA, conferring on it an open structure. The RuvB hexamer acts as an ATP-dependent pump, pulling dsDNA into and through the RuvAB complex. HJ branch migration allows RuvC to scan DNA until it finds its consensus sequence, where it cleaves and resolves the cruciform DNA. This chain is Holliday junction branch migration complex subunit RuvA, found in Streptococcus thermophilus (strain ATCC BAA-491 / LMD-9).